We begin with the raw amino-acid sequence, 92 residues long: Small ribosomal subunit protein bS20 (92 aa).

The interval 1–25 (MANSAQARKRARQAAKANSHNSALR) is disordered.

The protein belongs to the bacterial ribosomal protein bS20 family.

Binds directly to 16S ribosomal RNA. This chain is Small ribosomal subunit protein bS20, found in Burkholderia mallei (strain NCTC 10247).